Reading from the N-terminus, the 333-residue chain is MQQYSSKYNKQAILLVNLGTPDNYDTKSIKRYLKEFLSDPRVIEANPVLWKIILNLIILPIRAKKNVHTYKTVWNKQHNKSPLLFYTENLADKLDKKLDNYIVDYAMRYGNPSIESKIKSLQDQGATEIIIFPLYPQYSATTTATVYDEVYRVLSKLRWQPTIKGINPYYDNKFHIQTISQQIKEHLKKLDSTPDTVLFSFHGLPKEYFDKGDPYYCHCYKTYRLVKEELQNEYPNIDFELSFQSRFGPKKWLEPYTTVKLEEFAKQNKSVVVIAPGFSADCLETLEELAISEKENFIKKGGKEFSLIPCLNDSNQHVDMLYNIIDEEICLKK.

Fe cation-binding residues include His-202 and Glu-284.

It belongs to the ferrochelatase family.

It is found in the cytoplasm. The catalysed reaction is heme b + 2 H(+) = protoporphyrin IX + Fe(2+). It functions in the pathway porphyrin-containing compound metabolism; protoheme biosynthesis; protoheme from protoporphyrin-IX: step 1/1. Its function is as follows. Catalyzes the ferrous insertion into protoporphyrin IX. The polypeptide is Ferrochelatase (Francisella tularensis subsp. mediasiatica (strain FSC147)).